The sequence spans 839 residues: Protein translocase subunit SecA (839 aa).

ATP-binding positions include glutamine 85, 103 to 107, and aspartate 492; that span reads GEGKT. Residues 794 to 820 form a disordered region; that stretch reads EINYSGPDAGDTKKEPVRRKEKKIGRN. 4 residues coordinate Zn(2+): cysteine 823, cysteine 825, cysteine 834, and cysteine 835.

This sequence belongs to the SecA family. In terms of assembly, monomer and homodimer. Part of the essential Sec protein translocation apparatus which comprises SecA, SecYEG and auxiliary proteins SecDF. Other proteins may also be involved. The cofactor is Zn(2+).

The protein localises to the cell membrane. Its subcellular location is the cytoplasm. The enzyme catalyses ATP + H2O + cellular proteinSide 1 = ADP + phosphate + cellular proteinSide 2.. Its function is as follows. Part of the Sec protein translocase complex. Interacts with the SecYEG preprotein conducting channel. Has a central role in coupling the hydrolysis of ATP to the transfer of proteins into and across the cell membrane, serving as an ATP-driven molecular motor driving the stepwise translocation of polypeptide chains across the membrane. This Clostridium acetobutylicum (strain ATCC 824 / DSM 792 / JCM 1419 / IAM 19013 / LMG 5710 / NBRC 13948 / NRRL B-527 / VKM B-1787 / 2291 / W) protein is Protein translocase subunit SecA.